A 359-amino-acid polypeptide reads, in one-letter code: Phosphoserine aminotransferase (359 aa).

R41 serves as a coordination point for L-glutamate. Pyridoxal 5'-phosphate is bound by residues 75–76 (AS), W101, T152, D171, and Q194. K195 carries the N6-(pyridoxal phosphate)lysine modification. 236 to 237 (NT) contributes to the pyridoxal 5'-phosphate binding site.

It belongs to the class-V pyridoxal-phosphate-dependent aminotransferase family. SerC subfamily. In terms of assembly, homodimer. Requires pyridoxal 5'-phosphate as cofactor.

It is found in the cytoplasm. It catalyses the reaction O-phospho-L-serine + 2-oxoglutarate = 3-phosphooxypyruvate + L-glutamate. The catalysed reaction is 4-(phosphooxy)-L-threonine + 2-oxoglutarate = (R)-3-hydroxy-2-oxo-4-phosphooxybutanoate + L-glutamate. Its pathway is amino-acid biosynthesis; L-serine biosynthesis; L-serine from 3-phospho-D-glycerate: step 2/3. It functions in the pathway cofactor biosynthesis; pyridoxine 5'-phosphate biosynthesis; pyridoxine 5'-phosphate from D-erythrose 4-phosphate: step 3/5. Catalyzes the reversible conversion of 3-phosphohydroxypyruvate to phosphoserine and of 3-hydroxy-2-oxo-4-phosphonooxybutanoate to phosphohydroxythreonine. The protein is Phosphoserine aminotransferase of Acinetobacter baylyi (strain ATCC 33305 / BD413 / ADP1).